Here is a 134-residue protein sequence, read N- to C-terminus: Interleukin-5 (134 aa).

Residues Met1–Ala19 form the signal peptide. Thr22 is a glycosylation site (O-linked (GalNAc...) threonine). Asn47 and Asn90 each carry an N-linked (GlcNAc...) asparagine glycan.

The protein belongs to the IL-5 family. In terms of assembly, homodimer; disulfide-linked. Interacts with IL5RA. Interacts with CSF2RB.

Its subcellular location is the secreted. In terms of biological role, homodimeric cytokine expressed predominantly by T-lymphocytes and NK cells that plays an important role in the survival, differentiation, and chemotaxis of eosinophils. Also acts on activated and resting B-cells to induce immunoglobulin production, growth, and differentiation. Mechanistically, exerts its biological effects through a receptor composed of IL5RA subunit and the cytokine receptor common subunit beta/CSF2RB. Binding to the receptor leads to activation of various kinases including LYN, SYK and JAK2 and thereby propagates signals through the RAS-MAPK and JAK-STAT5 pathways respectively. The chain is Interleukin-5 (IL5) from Cercocebus atys (Sooty mangabey).